We begin with the raw amino-acid sequence, 246 residues long: Uridylate kinase (246 aa).

10 to 13 (KLSG) contacts ATP. Glycine 52 is a UMP binding site. Residues glycine 53 and arginine 57 each contribute to the ATP site. UMP is bound by residues aspartate 72 and 133–140 (TGNPFFTT). ATP-binding residues include threonine 160, tyrosine 166, and aspartate 169.

The protein belongs to the UMP kinase family. In terms of assembly, homohexamer.

Its subcellular location is the cytoplasm. It carries out the reaction UMP + ATP = UDP + ADP. It participates in pyrimidine metabolism; CTP biosynthesis via de novo pathway; UDP from UMP (UMPK route): step 1/1. Inhibited by UTP. Its function is as follows. Catalyzes the reversible phosphorylation of UMP to UDP. The polypeptide is Uridylate kinase (Halorhodospira halophila (strain DSM 244 / SL1) (Ectothiorhodospira halophila (strain DSM 244 / SL1))).